We begin with the raw amino-acid sequence, 1043 residues long: P3N-PIPO polyprotein (1043 aa).

A Peptidase S30 domain is found at Lys219–Phe362. Catalysis depends on for P1 proteinase activity residues His270, Asp279, and Ser313. An Involved in interaction with stylet and aphid transmission motif is present at residues Lys414–Cys417. The Involved in virions binding and aphid transmission signature appears at Pro672–Lys674. Residues Met698–Gly820 form the Peptidase C6 domain. Catalysis depends on for helper component proteinase activity residues Cys706 and His779.

The protein belongs to the potyviridae P3N-PIPO polyprotein family. As to quaternary structure, interacts (via PIPO domain) with host PCaP1 protein; this interaction may help to anchor the movement complex to the plasma membrane from which the complex could move to the plasmodesmata. Potyviral RNA is expressed as two polyproteins which undergo post-translational proteolytic processing. Genome polyprotein is processed by NIa-pro, P1 and HC-pro proteinases resulting in the production of at least ten individual proteins. P3N-PIPO is cleaved by P1 and HC-pro proteinases resulting in the production of three individual proteins. The P1 proteinase and the HC-pro cleave only their respective C-termini autocatalytically.

The protein resides in the host cell junction. It is found in the host plasmodesma. The catalysed reaction is Hydrolyzes a Gly-|-Gly bond at its own C-terminus, commonly in the sequence -Tyr-Xaa-Val-Gly-|-Gly, in the processing of the potyviral polyprotein.. Functionally, cysteine protease that cleaves a Gly-Gly dipeptide at its own C-terminus. Required for aphid transmission and also has proteolytic activity. Interacts with virions and aphid stylets. Acts as a suppressor of RNA-mediated gene silencing, also known as post-transcriptional gene silencing (PTGS), a mechanism of plant viral defense that limits the accumulation of viral RNAs. May have RNA-binding activity. Allows efficient cell to cell propagation, by bypassing the host cell wall barrier. Transports viral genome to neighboring plant cells directly through plasmosdesmata, without any budding. The chain is P3N-PIPO polyprotein from Alliaria petiolata (Garlic mustard).